A 359-amino-acid chain; its full sequence is PWWP domain-containing protein 1 (359 aa).

Residues 1–37 (MNNARTNAKRRRLSSKQGGLSISEGKESNIPSVVEES) form a disordered region. The PWWP domain occupies 52-114 (FGDRILVKAP…RNSVKPLLDS (63 aa)). Disordered regions lie at residues 133–161 (AYEA…AAEE) and 204–255 (VAST…SPLN). The segment covering 204–224 (VASTSRSSTQLSDQRYPLSSN) has biased composition (polar residues). At S252 the chain carries Phosphoserine.

In terms of assembly, interacts with set9 and histone H4K20me1. Associates with nucleosomes.

Its subcellular location is the nucleus. In terms of biological role, necessary for DNA damage checkpoint activation. Required for the association of set9 with chromatin and subsequent methylation of H4K20. Associates with H4K20me1 to increase the concentration of set9 on chromatin to perform H4K20me3. H4K20me3 is mainly enriched at heterochromatin and is required for proper heterochromatin assembly. The sequence is that of PWWP domain-containing protein 1 (pdp1) from Schizosaccharomyces pombe (strain 972 / ATCC 24843) (Fission yeast).